Consider the following 349-residue polypeptide: Ribosomal RNA small subunit methyltransferase H 2 (349 aa).

Residues glycine 80–histidine 82, aspartate 100, phenylalanine 130, aspartate 149, and glutamine 156 each bind S-adenosyl-L-methionine.

The protein belongs to the methyltransferase superfamily. RsmH family.

The protein resides in the cytoplasm. It carries out the reaction cytidine(1402) in 16S rRNA + S-adenosyl-L-methionine = N(4)-methylcytidine(1402) in 16S rRNA + S-adenosyl-L-homocysteine + H(+). In terms of biological role, specifically methylates the N4 position of cytidine in position 1402 (C1402) of 16S rRNA. This is Ribosomal RNA small subunit methyltransferase H 2 from Alkaliphilus metalliredigens (strain QYMF).